The primary structure comprises 97 residues: Large ribosomal subunit protein bL27 (97 aa).

The propeptide occupies 1-12 (MLNLNLANLQFM). A disordered region spans residues 15 to 37 (KKGGGSTSNGRDSQAKRLGAKAA).

The protein belongs to the bacterial ribosomal protein bL27 family. The N-terminus is cleaved by ribosomal processing cysteine protease Prp.

The sequence is that of Large ribosomal subunit protein bL27 from Streptococcus suis (strain 98HAH33).